The following is a 239-amino-acid chain: DNA repair protein RecO (239 aa).

Belongs to the RecO family.

Functionally, involved in DNA repair and RecF pathway recombination. The sequence is that of DNA repair protein RecO from Tolumonas auensis (strain DSM 9187 / NBRC 110442 / TA 4).